Here is a 535-residue protein sequence, read N- to C-terminus: Sodium/hydrogen exchanger 1 (535 aa).

Over Met-1 to Ser-21 the chain is Cytoplasmic. The chain crosses the membrane as a helical span at residues Val-22 to Leu-42. Residues Glu-43–Arg-46 lie on the Vacuolar side of the membrane. The chain crosses the membrane as a helical span at residues Trp-47 to Leu-67. The Cytoplasmic portion of the chain corresponds to Met-68–His-75. Residues Leu-76 to Ala-96 form a helical membrane-spanning segment. Topologically, residues Gly-97–Leu-114 are vacuolar. The helical transmembrane segment at Phe-115 to Phe-135 threads the bilayer. Residues Ser-136–Arg-137 are Cytoplasmic-facing. Residues Met-138 to Thr-158 traverse the membrane as a helical segment. Topologically, residues Asp-159–Pro-173 are vacuolar. Residues Phe-174 to Phe-194 form a helical membrane-spanning segment. Residues Asn-195–Phe-218 are Cytoplasmic-facing. A helical membrane pass occupies residues Tyr-219–Ile-239. At Lys-240–Tyr-264 the chain is on the vacuolar side. A helical transmembrane segment spans residues Met-265 to Met-285. Over Ser-286 to Ala-304 the chain is Cytoplasmic. The chain crosses the membrane as a helical span at residues Phe-305–Leu-325. At Asp-326–Ser-344 the chain is on the vacuolar side. Residues Ser-345 to Leu-365 traverse the membrane as a helical segment. Over Ser-366–Gln-381 the chain is Cytoplasmic. A helical transmembrane segment spans residues Gln-382 to Asn-402. Residues Lys-403 to Asn-415 are Vacuolar-facing. Residues Ala-416 to Met-436 traverse the membrane as a helical segment. The Cytoplasmic segment spans residues Thr-437 to Arg-535. The interval Val-452–Thr-478 is disordered. The segment covering Ser-454–Ser-469 has biased composition (low complexity).

The protein belongs to the monovalent cation:proton antiporter 1 (CPA1) transporter (TC 2.A.36) family.

The protein localises to the vacuole membrane. The catalysed reaction is Na(+)(in) + H(+)(out) = Na(+)(out) + H(+)(in). The enzyme catalyses K(+)(in) + H(+)(out) = K(+)(out) + H(+)(in). Its function is as follows. Vacuolar antiporter that acts in low affinity electroneutral exchange of protons H(+) for cations such as Na(+) or K(+) across membranes. Plays important roles in the transport of Na(+) and K(+) accumulated in the cytoplasm into vacuoles, and is involved in salt stress tolerance. The polypeptide is Sodium/hydrogen exchanger 1 (Oryza sativa subsp. japonica (Rice)).